A 121-amino-acid chain; its full sequence is Small ribosomal subunit protein uS13 (121 aa).

The disordered stretch occupies residues 94–121 (GLPMRGQRTRTNARTRKGPRKAAAALKK).

Belongs to the universal ribosomal protein uS13 family. As to quaternary structure, part of the 30S ribosomal subunit. Forms a loose heterodimer with protein S19. Forms two bridges to the 50S subunit in the 70S ribosome.

In terms of biological role, located at the top of the head of the 30S subunit, it contacts several helices of the 16S rRNA. In the 70S ribosome it contacts the 23S rRNA (bridge B1a) and protein L5 of the 50S subunit (bridge B1b), connecting the 2 subunits; these bridges are implicated in subunit movement. Contacts the tRNAs in the A and P-sites. This chain is Small ribosomal subunit protein uS13, found in Polaromonas sp. (strain JS666 / ATCC BAA-500).